Consider the following 403-residue polypeptide: Double C2-like domain-containing protein alpha (403 aa).

The interval methionine 1–alanine 92 is interaction with UNC13D and DYNLT1. C2 domains follow at residues alanine 92–isoleucine 214 and glutamate 254–histidine 387. Ca(2+) contacts are provided by aspartate 123, aspartate 129, aspartate 184, aspartate 186, aspartate 285, aspartate 291, aspartate 345, aspartate 347, and aspartate 353. Residues arginine 218–alanine 403 form an interaction with UNC13D region.

Interacts (via N-terminus) with UNC13A. Interacts with cytoplasmic dynein light chain DYNLT1. Interacts with UNC13D. The cofactor is Ca(2+). In terms of tissue distribution, predominantly expressed in brain. Also found in non-neural tissues. Expressed in RBL-2H3 mast cell line.

It localises to the cytoplasmic vesicle. The protein resides in the secretory vesicle. Its subcellular location is the synaptic vesicle membrane. It is found in the synapse. The protein localises to the synaptosome. It localises to the lysosome. In terms of biological role, calcium sensor which most probably regulates fusion of vesicles with membranes. Binds calcium and phospholipids. May be involved in calcium dependent neurotransmitter release through the interaction with UNC13A. May be involved in calcium-dependent spontaneous release of neurotransmitter in absence of action potentials in neuronal cells. Regulates Ca(2+)-dependent secretory lysosome exocytosis in mast cells. This chain is Double C2-like domain-containing protein alpha (Doc2a), found in Rattus norvegicus (Rat).